A 427-amino-acid polypeptide reads, in one-letter code: UPF0761 membrane protein Plut_1323 (427 aa).

6 consecutive transmembrane segments (helical) span residues 51 to 71 (LLSI…FAVF), 105 to 125 (TFTM…VLIS), 147 to 167 (FTLY…SLAA), 188 to 208 (LLSL…YLLV), 221 to 241 (GALV…FYVA), and 251 to 271 (GALS…VVVL).

Belongs to the UPF0761 family.

It is found in the cell inner membrane. In Chlorobium luteolum (strain DSM 273 / BCRC 81028 / 2530) (Pelodictyon luteolum), this protein is UPF0761 membrane protein Plut_1323.